We begin with the raw amino-acid sequence, 425 residues long: Serine--tRNA ligase (425 aa).

An L-serine-binding site is contributed by 230 to 232 (TAE). Residue 261-263 (RSE) coordinates ATP. Glu284 is an L-serine binding site. 348 to 351 (EISS) is a binding site for ATP. Ser384 contacts L-serine.

It belongs to the class-II aminoacyl-tRNA synthetase family. Type-1 seryl-tRNA synthetase subfamily. Homodimer. The tRNA molecule binds across the dimer.

It localises to the cytoplasm. The catalysed reaction is tRNA(Ser) + L-serine + ATP = L-seryl-tRNA(Ser) + AMP + diphosphate + H(+). The enzyme catalyses tRNA(Sec) + L-serine + ATP = L-seryl-tRNA(Sec) + AMP + diphosphate + H(+). Its pathway is aminoacyl-tRNA biosynthesis; selenocysteinyl-tRNA(Sec) biosynthesis; L-seryl-tRNA(Sec) from L-serine and tRNA(Sec): step 1/1. Its function is as follows. Catalyzes the attachment of serine to tRNA(Ser). Is also able to aminoacylate tRNA(Sec) with serine, to form the misacylated tRNA L-seryl-tRNA(Sec), which will be further converted into selenocysteinyl-tRNA(Sec). This is Serine--tRNA ligase from Nitratidesulfovibrio vulgaris (strain DSM 19637 / Miyazaki F) (Desulfovibrio vulgaris).